We begin with the raw amino-acid sequence, 24 residues long: uncharacterized protein (24 aa).

This is an uncharacterized protein from Saccharomyces cerevisiae (strain ATCC 204508 / S288c) (Baker's yeast).